We begin with the raw amino-acid sequence, 352 residues long: Histidine biosynthesis bifunctional protein HisB (352 aa).

The histidinol-phosphatase stretch occupies residues methionine 1–phenylalanine 164. The active-site Nucleophile is aspartate 9. 2 residues coordinate Mg(2+): aspartate 9 and aspartate 11. Aspartate 11 (proton donor) is an active-site residue. The Zn(2+) site is built by cysteine 93, histidine 95, cysteine 101, and cysteine 103. Aspartate 130 serves as a coordination point for Mg(2+). Residues arginine 165–isoleucine 352 form an imidazoleglycerol-phosphate dehydratase region.

The protein in the N-terminal section; belongs to the histidinol-phosphatase family. In the C-terminal section; belongs to the imidazoleglycerol-phosphate dehydratase family. It depends on Mg(2+) as a cofactor. Requires Zn(2+) as cofactor.

It localises to the cytoplasm. The enzyme catalyses D-erythro-1-(imidazol-4-yl)glycerol 3-phosphate = 3-(imidazol-4-yl)-2-oxopropyl phosphate + H2O. The catalysed reaction is L-histidinol phosphate + H2O = L-histidinol + phosphate. It functions in the pathway amino-acid biosynthesis; L-histidine biosynthesis; L-histidine from 5-phospho-alpha-D-ribose 1-diphosphate: step 6/9. It participates in amino-acid biosynthesis; L-histidine biosynthesis; L-histidine from 5-phospho-alpha-D-ribose 1-diphosphate: step 8/9. This is Histidine biosynthesis bifunctional protein HisB from Campylobacter jejuni subsp. jejuni serotype O:2 (strain ATCC 700819 / NCTC 11168).